Reading from the N-terminus, the 1101-residue chain is ATP-dependent DNA helicase mph1 (1101 aa).

Disordered regions lie at residues 22–59 (PGTSDTVESVQTNNRPAKQSDISISQGNEEDEFQSPDR), 95–138 (LTQP…QYHD), 154–231 (FEEE…TNRP), and 250–270 (SSQRGEQIFSPPEKSEPPTHH). Over residues 24-48 (TSDTVESVQTNNRPAKQSDISISQG) the composition is skewed to polar residues. Low complexity predominate over residues 170–190 (TPARTAAAPCAAPKGTAADVP). Acidic residues predominate over residues 191 to 202 (FDLDDIPDDAFD). Over residues 209–228 (PPRSTSQATRGPPVQSQFRT) the composition is skewed to polar residues. The Helicase ATP-binding domain occupies 296–464 (IAQRGLFHNL…AIIDDLGIAK (169 aa)). ATP is bound at residue 309–316 (LPTGLGKT). A DEAH box motif is present at residues 412–415 (DEAH). One can recognise a Helicase C-terminal domain in the interval 634–808 (YLKQVVLNHF…GTRFTFHDDK (175 aa)). 2 disordered regions span residues 824–890 (RQID…PTPE) and 991–1067 (SRDP…QDAF). Positions 842–854 (RRARPPKRPPKKF) are enriched in basic residues.

The protein belongs to the DEAD box helicase family. DEAH subfamily. FANCM sub-subfamily. Interacts with the MHF histone-fold complex to form the FANCM-MHF complex.

Its subcellular location is the nucleus. It carries out the reaction ATP + H2O = ADP + phosphate + H(+). Its function is as follows. ATP-dependent DNA helicase involved in DNA damage repair by homologous recombination and in genome maintenance. Capable of unwinding D-loops. Plays a role in limiting crossover recombinants during mitotic DNA double-strand break (DSB) repair. Component of a FANCM-MHF complex which promotes gene conversion at blocked replication forks, probably by reversal of the stalled fork. The sequence is that of ATP-dependent DNA helicase mph1 from Aspergillus fumigatus (strain CBS 144.89 / FGSC A1163 / CEA10) (Neosartorya fumigata).